The sequence spans 204 residues: MNSGGSDSFDYLLQLTKALSAECRANRQETDRIELLLKRLAKQSGISYDNLSKNIIPDSWKDNASQKASPPTEAQKLISENFKLIYEIEKQEYFNTKAVALINNINEHFSYIKNFIDEQNAIRERNIATFSSEKLDERNKSLQQNYESLKTENEETKKKLHSIIKQFEKLLKEVDWDRISKDSRDYSRFKKQLEYLQDTYQVLK.

As to quaternary structure, component of a complex at least composed of FAR3, FAR7, FAR8, FAR10, FAR11 and VPS64.

Its subcellular location is the endoplasmic reticulum. Functionally, participates in the control of the reentry into the cell cycle following pheromone treatment. The protein is Factor arrest protein 3 (FAR3) of Saccharomyces cerevisiae (strain ATCC 204508 / S288c) (Baker's yeast).